The chain runs to 123 residues: Large ribosomal subunit protein uL18 (123 aa).

This sequence belongs to the universal ribosomal protein uL18 family. Part of the 50S ribosomal subunit; part of the 5S rRNA/L5/L18/L25 subcomplex. Contacts the 5S and 23S rRNAs.

In terms of biological role, this is one of the proteins that bind and probably mediate the attachment of the 5S RNA into the large ribosomal subunit, where it forms part of the central protuberance. This chain is Large ribosomal subunit protein uL18, found in Symbiobacterium thermophilum (strain DSM 24528 / JCM 14929 / IAM 14863 / T).